We begin with the raw amino-acid sequence, 474 residues long: Glycogen synthase (474 aa).

K15 provides a ligand contact to ADP-alpha-D-glucose.

It belongs to the glycosyltransferase 1 family. Bacterial/plant glycogen synthase subfamily.

It catalyses the reaction [(1-&gt;4)-alpha-D-glucosyl](n) + ADP-alpha-D-glucose = [(1-&gt;4)-alpha-D-glucosyl](n+1) + ADP + H(+). It functions in the pathway glycan biosynthesis; glycogen biosynthesis. Its function is as follows. Synthesizes alpha-1,4-glucan chains using ADP-glucose. This Finegoldia magna (strain ATCC 29328 / DSM 20472 / WAL 2508) (Peptostreptococcus magnus) protein is Glycogen synthase.